A 553-amino-acid chain; its full sequence is Glycerol-3-phosphate dehydrogenase (553 aa).

13-41 is an FAD binding site; that stretch reads DLIVIGGGINGVGTARDGALRGLKTLLIE.

Belongs to the FAD-dependent glycerol-3-phosphate dehydrogenase family. FAD is required as a cofactor.

The protein resides in the cytoplasm. It carries out the reaction a quinone + sn-glycerol 3-phosphate = dihydroxyacetone phosphate + a quinol. In Synechocystis sp. (strain ATCC 27184 / PCC 6803 / Kazusa), this protein is Glycerol-3-phosphate dehydrogenase (glpD).